Consider the following 510-residue polypeptide: Beta-glucosidase 40 (510 aa).

Residues 1 to 29 (MAHRRLIMTMTKMMMMVTMMMMMDKTCIC) form the signal peptide. Residues glutamine 51, histidine 152, and 197–198 (NE) contribute to the a beta-D-glucoside site. Glutamate 198 serves as the catalytic Proton donor. Cysteine 217 and cysteine 225 are disulfide-bonded. N-linked (GlcNAc...) asparagine glycans are attached at residues asparagine 229 and asparagine 278. An a beta-D-glucoside-binding site is contributed by tyrosine 341. An N-linked (GlcNAc...) asparagine glycan is attached at asparagine 349. A beta-D-glucoside-binding positions include glutamate 414, tryptophan 464, 471 to 472 (EW), and phenylalanine 480. Glutamate 414 (nucleophile) is an active-site residue. A glycan (N-linked (GlcNAc...) asparagine) is linked at asparagine 507.

It belongs to the glycosyl hydrolase 1 family.

It carries out the reaction Hydrolysis of terminal, non-reducing beta-D-glucosyl residues with release of beta-D-glucose.. The chain is Beta-glucosidase 40 from Arabidopsis thaliana (Mouse-ear cress).